The primary structure comprises 240 residues: Probable transcriptional regulator ycf27 (240 aa).

The Response regulatory domain maps to 5–118; that stretch reads KILVIDDEAS…ELEARIRSVL (114 aa). 4-aspartylphosphate is present on Asp-54. The segment at residues 74–92 is a DNA-binding region (H-T-H motif); the sequence is DVPIIMLTALSDVSDRITG. Positions 133–234 form a DNA-binding region, ompR/PhoB-type; it reads SGIINIGFLK…ARGTGYLFQR (102 aa).

The protein localises to the plastid. It localises to the chloroplast. Probable promoter-specific protein mediating the interaction between DNA and RNA polymerase. The protein is Probable transcriptional regulator ycf27 (ycf27) of Porphyridium aerugineum (Red microalga).